The following is a 485-amino-acid chain: Glutamyl-tRNA(Gln) amidotransferase subunit A (485 aa).

Catalysis depends on charge relay system residues Lys-79 and Ser-154. Ser-178 acts as the Acyl-ester intermediate in catalysis.

Belongs to the amidase family. GatA subfamily. Heterotrimer of A, B and C subunits.

The catalysed reaction is L-glutamyl-tRNA(Gln) + L-glutamine + ATP + H2O = L-glutaminyl-tRNA(Gln) + L-glutamate + ADP + phosphate + H(+). Its function is as follows. Allows the formation of correctly charged Gln-tRNA(Gln) through the transamidation of misacylated Glu-tRNA(Gln) in organisms which lack glutaminyl-tRNA synthetase. The reaction takes place in the presence of glutamine and ATP through an activated gamma-phospho-Glu-tRNA(Gln). The polypeptide is Glutamyl-tRNA(Gln) amidotransferase subunit A (Staphylococcus aureus (strain bovine RF122 / ET3-1)).